A 308-amino-acid polypeptide reads, in one-letter code: Cilia- and flagella-associated protein 73 (308 aa).

2 coiled-coil regions span residues 103–134 (RIQKEKEIEQLTEVLEELKSEKERILEVLEKN) and 164–227 (LSAT…QEAK).

It belongs to the CFAP73 family. As to quaternary structure, interacts with FAP100; form the modifier of inner arm (MIA) complex.

The protein resides in the cytoplasm. Its subcellular location is the cytoskeleton. It is found in the flagellum axoneme. Functionally, as part of MIA, a complex associated with the outer doublet microtubules of the axoneme, may play a role in ciliary/flagellar motility by regulating the assembly and the activity of inner dynein arm. This chain is Cilia- and flagella-associated protein 73, found in Chlamydomonas reinhardtii (Chlamydomonas smithii).